The sequence spans 449 residues: Maltoporin (449 aa).

Residues 1–24 form the signal peptide; it reads MITLRKLPLAVAVAAGVMSAQAMA.

Belongs to the porin LamB (TC 1.B.3) family. In terms of assembly, homotrimer formed of three 18-stranded antiparallel beta-barrels, containing three independent channels.

The protein resides in the cell outer membrane. The catalysed reaction is beta-maltose(in) = beta-maltose(out). Involved in the transport of maltose and maltodextrins. The sequence is that of Maltoporin from Citrobacter koseri (strain ATCC BAA-895 / CDC 4225-83 / SGSC4696).